Reading from the N-terminus, the 1090-residue chain is Pullulanase (1090 aa).

An N-terminal signal peptide occupies residues 1 to 19 (MLRYTRNALVLGSLVLLSG). Cys-20 carries N-palmitoyl cysteine lipidation. A lipid anchor (S-diacylglycerol cysteine) is attached at Cys-20. Asp-684 serves as the catalytic Nucleophile. Residue Glu-713 is the Proton donor of the active site.

Belongs to the glycosyl hydrolase 13 family. Homotrimer.

Its subcellular location is the cell membrane. The catalysed reaction is Hydrolysis of (1-&gt;6)-alpha-D-glucosidic linkages in pullulan, amylopectin and glycogen, and in the alpha- and beta-limit dextrins of amylopectin and glycogen.. The polypeptide is Pullulanase (pulA) (Klebsiella pneumoniae).